The following is a 465-amino-acid chain: Cysteine--tRNA ligase (465 aa).

Cysteine 29 contacts Zn(2+). The 'HIGH' region motif lies at 31–41 (PTVYNYIHIGN). Cysteine 209, histidine 234, and glutamate 238 together coordinate Zn(2+). Residues 266 to 270 (KMSKS) carry the 'KMSKS' region motif. Position 269 (lysine 269) interacts with ATP. Position 270 is a phosphoserine (serine 270).

Belongs to the class-I aminoacyl-tRNA synthetase family. As to quaternary structure, monomer. It depends on Zn(2+) as a cofactor.

It is found in the cytoplasm. It carries out the reaction tRNA(Cys) + L-cysteine + ATP = L-cysteinyl-tRNA(Cys) + AMP + diphosphate. This is Cysteine--tRNA ligase from Bacillus cereus (strain 03BB102).